The sequence spans 344 residues: Phenylalanine--tRNA ligase alpha subunit (344 aa).

Glutamate 255 contacts Mg(2+).

This sequence belongs to the class-II aminoacyl-tRNA synthetase family. Phe-tRNA synthetase alpha subunit type 1 subfamily. In terms of assembly, tetramer of two alpha and two beta subunits. Requires Mg(2+) as cofactor.

The protein localises to the cytoplasm. The catalysed reaction is tRNA(Phe) + L-phenylalanine + ATP = L-phenylalanyl-tRNA(Phe) + AMP + diphosphate + H(+). This chain is Phenylalanine--tRNA ligase alpha subunit, found in Phocaeicola vulgatus (strain ATCC 8482 / DSM 1447 / JCM 5826 / CCUG 4940 / NBRC 14291 / NCTC 11154) (Bacteroides vulgatus).